Consider the following 350-residue polypeptide: Transmembrane protein 185B (350 aa).

Transmembrane regions (helical) follow at residues 16–36 (LIYT…DGII), 41–61 (WAVF…ASVG), 81–101 (FKAM…EVLV), 111–131 (FWLL…AACV), 168–188 (WLVV…VVLY), 211–231 (VTMA…EVLL), and 240–260 (TFSY…LMAT).

This sequence belongs to the TMEM185 family.

The protein resides in the membrane. This Homo sapiens (Human) protein is Transmembrane protein 185B (TMEM185B).